The following is a 450-amino-acid chain: Probable glucoamylase (450 aa).

Positions 1–16 (MRTYWLFLLLGGVVSA) are cleaved as a signal peptide. A propeptide spanning residues 17-28 (ESLLSPNKRSKE) is cleaved from the precursor. W147 contacts substrate. The active-site Proton acceptor is the D203. The active-site Proton donor is the E206. Residues N383 and N409 are each glycosylated (N-linked (GlcNAc...) asparagine).

The protein belongs to the glycosyl hydrolase 15 family.

The enzyme catalyses Hydrolysis of terminal (1-&gt;4)-linked alpha-D-glucose residues successively from non-reducing ends of the chains with release of beta-D-glucose.. In Schizosaccharomyces pombe (strain 972 / ATCC 24843) (Fission yeast), this protein is Probable glucoamylase (meu17).